The chain runs to 198 residues: dTTP/UTP pyrophosphatase (198 aa).

D75 functions as the Proton acceptor in the catalytic mechanism.

Belongs to the Maf family. YhdE subfamily. A divalent metal cation is required as a cofactor.

It is found in the cytoplasm. It carries out the reaction dTTP + H2O = dTMP + diphosphate + H(+). The catalysed reaction is UTP + H2O = UMP + diphosphate + H(+). Functionally, nucleoside triphosphate pyrophosphatase that hydrolyzes dTTP and UTP. May have a dual role in cell division arrest and in preventing the incorporation of modified nucleotides into cellular nucleic acids. This is dTTP/UTP pyrophosphatase from Wolbachia sp. subsp. Drosophila simulans (strain wRi).